The sequence spans 347 residues: NADH-ubiquinone oxidoreductase chain 2 (347 aa).

A run of 10 helical transmembrane segments spans residues 1–21 (MNPIIFFMIMLTIILGTTIVM), 25–45 (HWLTVWMGFEMNMLAIIPMLM), 59–79 (YFLTQATASMLLLLAITINLM), 96–116 (IILTIALAMKLGLAPFHFWVP), 148–168 (IINLDLLLMMGLLSVMIGGWG), 178–198 (IMAYSSIAHMGWMVTILIYNP), 200–220 (LTMLNLTIYIMMTLTMFMLLI), 237–257 (MPLITTMMLTTLLSMGGLPPL), 274–294 (NSIILPTFMAITALLNLYFYM), and 326–346 (LSPLMVISTMTLPLTPMMMIL).

This sequence belongs to the complex I subunit 2 family. As to quaternary structure, core subunit of respiratory chain NADH dehydrogenase (Complex I) which is composed of 45 different subunits. Interacts with TMEM242.

The protein localises to the mitochondrion inner membrane. The enzyme catalyses a ubiquinone + NADH + 5 H(+)(in) = a ubiquinol + NAD(+) + 4 H(+)(out). In terms of biological role, core subunit of the mitochondrial membrane respiratory chain NADH dehydrogenase (Complex I) which catalyzes electron transfer from NADH through the respiratory chain, using ubiquinone as an electron acceptor. Essential for the catalytic activity and assembly of complex I. This is NADH-ubiquinone oxidoreductase chain 2 from Gardnerycteris crenulata (Striped hairy-nosed bat).